Reading from the N-terminus, the 1124-residue chain is Zinc finger E-box-binding homeobox 1 (1124 aa).

2 disordered regions span residues 1-124 (MADG…NHDP) and 142-163 (APEE…NGTP). Over residues 18-30 (NNVTNYNTVVETN) the composition is skewed to low complexity. Residues serine 31 and serine 33 each carry the phosphoserine modification. The span at 44-62 (EESVTDAADCEGVPEDDLP) shows a compositional bias: acidic residues. Residues 72 to 91 (SSEREGNAKNCWEDDRKEGQ) are compositionally biased toward basic and acidic residues. The C2H2-type 1 zinc finger occupies 170–193 (LTCPYCDRGYKRFTSLKEHIKYRH). Residues lysine 186 and lysine 195 each participate in a glycyl lysine isopeptide (Lys-Gly) (interchain with G-Cter in SUMO2) cross-link. 2 C2H2-type zinc fingers span residues 200–222 (FSCS…MTSH) and 240–262 (FKCT…LRIH). Residues 268–292 (YECPNCKKRFSHSGSYSSHISSKKC) form a C2H2-type 4; atypical zinc finger. Positions 304 to 327 (TGLKTSQCSSPSLSASPGSPTRPQ) are disordered. Lysine 307 participates in a covalent cross-link: Glycyl lysine isopeptide (Lys-Gly) (interchain with G-Cter in SUMO2). The segment covering 309-322 (SQCSSPSLSASPGS) has biased composition (low complexity). Serine 313 and serine 322 each carry phosphoserine. Glycyl lysine isopeptide (Lys-Gly) (interchain with G-Cter in SUMO2) cross-links involve residues lysine 331 and lysine 335. Lysine 347 participates in a covalent cross-link: Glycyl lysine isopeptide (Lys-Gly) (interchain with G-Cter in SUMO); alternate. Lysine 347 is covalently cross-linked (Glycyl lysine isopeptide (Lys-Gly) (interchain with G-Cter in SUMO2); alternate). Residues lysine 439, lysine 493, lysine 504, lysine 515, lysine 548, and lysine 553 each participate in a glycyl lysine isopeptide (Lys-Gly) (interchain with G-Cter in SUMO2) cross-link. Disordered stretches follow at residues 551–586 (DLKQ…SPSQ) and 636–714 (QISV…SSSR). The segment at residues 581–640 (NLSPSQPPLKNLLSLLKAYYALNAQPSAEELSKIADSVNLPLDVVKKWFEKMQAGQISVQ) is a DNA-binding region (homeobox; atypical). A phosphoserine mark is found at serine 642, serine 679, serine 686, serine 693, and serine 700. The segment covering 656–687 (AKNNDQPQSANANEPQDSTVNLQSPLKMTNSP) has biased composition (polar residues). Residues 692–714 (GSTTNGSRSSTPSPSPLNLSSSR) are compositionally biased toward low complexity. Phosphothreonine is present on threonine 702. The residue at position 704 (serine 704) is a Phosphoserine. Lysine 774 is covalently cross-linked (Glycyl lysine isopeptide (Lys-Gly) (interchain with G-Cter in SUMO); alternate). Lysine 774 participates in a covalent cross-link: Glycyl lysine isopeptide (Lys-Gly) (interchain with G-Cter in SUMO2); alternate. The interval 856 to 898 (PPLKVIQPNGNQDERQDTSSEGVSNVEDQNDSDSTPPKKKMRK) is disordered. Over residues 874–890 (SSEGVSNVEDQNDSDST) the composition is skewed to polar residues. C2H2-type zinc fingers lie at residues 904 to 926 (YACD…KYEH) and 932 to 954 (HECG…MRLH). A C2H2-type 7; atypical zinc finger spans residues 960-981 (YQCDKCGKRFSHSGSYSQHMNH). Residues 989-1124 (EAEERDSTEQ…QVSEEKTNEA (136 aa)) form a disordered region. Composition is skewed to acidic residues over residues 1031 to 1052 (EEDE…ELQE) and 1062 to 1084 (DEEE…ENEG). Residues 1085–1099 (EEAKTEGLMKDDRAE) show a composition bias toward basic and acidic residues. The segment covering 1100 to 1115 (SQASSLGQKVGESSEQ) has biased composition (polar residues).

The protein belongs to the delta-EF1/ZFH-1 C2H2-type zinc-finger family. In terms of assembly, interacts (via N-terminus) with SMARCA4/BRG1. Ubiquitinated, leading to degradation in a proteasome-dependent manner. Deubiquitinated by USP51, leading to stabilization. Colocalizes with SMARCA4/BRG1 in E-cadherin-negative cells from established lines, and stroma of normal colon as well as in de-differentiated epithelial cells at the invasion front of colorectal carcinomas (at protein level). Expressed in heart and skeletal muscle, but not in liver, spleen, or pancreas.

The protein localises to the nucleus. Acts as a transcriptional repressor. Inhibits interleukin-2 (IL-2) gene expression. Enhances or represses the promoter activity of the ATP1A1 gene depending on the quantity of cDNA and on the cell type. Represses E-cadherin promoter and induces an epithelial-mesenchymal transition (EMT) by recruiting SMARCA4/BRG1. Represses BCL6 transcription in the presence of the corepressor CTBP1. Positively regulates neuronal differentiation. Represses RCOR1 transcription activation during neurogenesis. Represses transcription by binding to the E box (5'-CANNTG-3'). In the absence of TGFB1, acts as a repressor of COL1A2 transcription via binding to the E-box in the upstream enhancer region. This is Zinc finger E-box-binding homeobox 1 from Homo sapiens (Human).